Here is a 359-residue protein sequence, read N- to C-terminus: 3-dehydroquinate synthase (359 aa).

NAD(+)-binding positions include 71–76 (DGEQYK), 105–109 (GVIGD), 129–130 (TT), lysine 142, lysine 151, and 169–172 (CLST). Zn(2+) contacts are provided by glutamate 184, histidine 247, and histidine 264.

The protein belongs to the sugar phosphate cyclases superfamily. Dehydroquinate synthase family. Co(2+) serves as cofactor. Requires Zn(2+) as cofactor. NAD(+) is required as a cofactor.

It is found in the cytoplasm. It catalyses the reaction 7-phospho-2-dehydro-3-deoxy-D-arabino-heptonate = 3-dehydroquinate + phosphate. Its pathway is metabolic intermediate biosynthesis; chorismate biosynthesis; chorismate from D-erythrose 4-phosphate and phosphoenolpyruvate: step 2/7. Functionally, catalyzes the conversion of 3-deoxy-D-arabino-heptulosonate 7-phosphate (DAHP) to dehydroquinate (DHQ). This is 3-dehydroquinate synthase from Shewanella piezotolerans (strain WP3 / JCM 13877).